The sequence spans 220 residues: Phosphoserine phosphatase (220 aa).

The active-site Nucleophile is Asp11. Mg(2+)-binding residues include Asp11 and Asp13. The active-site Proton donor is the Asp13. Substrate contacts are provided by residues Glu20, Arg56, 99 to 100 (SG), and Lys144. Residue Asp167 participates in Mg(2+) binding. Asn170 contributes to the substrate binding site.

Belongs to the HAD-like hydrolase superfamily. SerB family. The cofactor is Mg(2+).

The catalysed reaction is O-phospho-L-serine + H2O = L-serine + phosphate. It carries out the reaction O-phospho-D-serine + H2O = D-serine + phosphate. It participates in amino-acid biosynthesis; L-serine biosynthesis; L-serine from 3-phospho-D-glycerate: step 3/3. The protein is Phosphoserine phosphatase of Idiomarina loihiensis (strain ATCC BAA-735 / DSM 15497 / L2-TR).